Reading from the N-terminus, the 261-residue chain is Thiamine thiazole synthase (261 aa).

NAD(+) is bound by residues S40, 59–60 (ER), G67, V133, and 159–161 (HVD). Residues D161 and H176 each contribute to the Fe cation site. NAD(+)-binding residues include S179 and M226. R236 serves as a coordination point for glycine.

The protein belongs to the THI4 family. As to quaternary structure, homooctamer; tetramer of dimers. Fe(2+) is required as a cofactor.

The catalysed reaction is hydrogen sulfide + glycine + NAD(+) = ADP-5-ethyl-4-methylthiazole-2-carboxylate + nicotinamide + 3 H2O + H(+). The protein operates within cofactor biosynthesis; thiamine diphosphate biosynthesis. In terms of biological role, involved in the biosynthesis of the thiazole moiety of thiamine. Catalyzes the conversion of NAD and glycine to adenosine diphosphate 5-(2-hydroxyethyl)-4-methylthiazole-2-carboxylate (ADT), an adenylated thiazole intermediate, using free sulfide as a source of sulfur. The protein is Thiamine thiazole synthase of Methanococcus vannielii (strain ATCC 35089 / DSM 1224 / JCM 13029 / OCM 148 / SB).